The primary structure comprises 72 residues: Protein RALF-like 12 (72 aa).

An N-terminal signal peptide occupies residues 1–17 (MKAWVIGLLVICAVVIA). 2 disulfide bridges follow: C34–C43 and C63–C69. Residues 37-60 (PNPPPGCNPPGTEQKNPTPVNEYS) form a disordered region.

The protein belongs to the plant rapid alkalinization factor (RALF) family.

The protein resides in the secreted. Functionally, cell signaling peptide that may regulate plant stress, growth, and development. Mediates a rapid alkalinization of extracellular space by mediating a transient increase in the cytoplasmic Ca(2+) concentration leading to a calcium-dependent signaling events through a cell surface receptor and a concomitant activation of some intracellular mitogen-activated protein kinases. This is Protein RALF-like 12 (RALFL12) from Arabidopsis thaliana (Mouse-ear cress).